The chain runs to 202 residues: Remorin 1.4 (202 aa).

The span at 1-10 (MAEEEPKKVT) shows a compositional bias: basic and acidic residues. Positions 1–79 (MAEEEPKKVT…VEEEKKEGSV (79 aa)) are disordered. The segment covering 25 to 39 (EKPAAAADVAPQEKP) has biased composition (low complexity). The span at 40–50 (VAPPPVLPSPA) shows a compositional bias: pro residues. Over residues 68 to 79 (KEVEEEKKEGSV) the composition is skewed to basic and acidic residues. Residues 123 to 169 (ENNKKAAVEAELKKMEEQLEKKKAEYVEQMKNKIAQIHKEAEEKRAM) adopt a coiled-coil conformation.

Belongs to the remorin family.

In Arabidopsis thaliana (Mouse-ear cress), this protein is Remorin 1.4.